A 341-amino-acid chain; its full sequence is Undecaprenyl-phosphate 4-deoxy-4-formamido-L-arabinose transferase (341 aa).

The next 2 helical transmembrane spans lie at 235-255 (LSIV…ALIV) and 269-289 (LFVL…GMGL).

The protein belongs to the glycosyltransferase 2 family.

The protein resides in the cell inner membrane. It carries out the reaction UDP-4-deoxy-4-formamido-beta-L-arabinose + di-trans,octa-cis-undecaprenyl phosphate = 4-deoxy-4-formamido-alpha-L-arabinopyranosyl di-trans,octa-cis-undecaprenyl phosphate + UDP. It participates in glycolipid biosynthesis; 4-amino-4-deoxy-alpha-L-arabinose undecaprenyl phosphate biosynthesis; 4-amino-4-deoxy-alpha-L-arabinose undecaprenyl phosphate from UDP-4-deoxy-4-formamido-beta-L-arabinose and undecaprenyl phosphate: step 1/2. It functions in the pathway bacterial outer membrane biogenesis; lipopolysaccharide biosynthesis. Its function is as follows. Catalyzes the transfer of 4-deoxy-4-formamido-L-arabinose from UDP to undecaprenyl phosphate. The modified arabinose is attached to lipid A and is required for resistance to polymyxin and cationic antimicrobial peptides. The chain is Undecaprenyl-phosphate 4-deoxy-4-formamido-L-arabinose transferase from Pseudomonas fluorescens (strain SBW25).